The primary structure comprises 301 residues: MGAQLSTLSHVVLSPVWFIYSLFMKLFQRSTPAITLENPDIKYPLRLIDKEVISPDTRRFRFALPSPQHILGLPIGQHIYLSTRIDGNLVIRPYTPVSSDDDKGFVDLVVKVYFKDTHPKFPAGGKMSQYLENMKIGDTIEFRGPNGLLVYQGKGKFAIRADKKSNPVVRTVKSVGMIAGGTGITPMLQVIRAVLKDPNDHTVCYLLFANQSEKDILLRPELEELRNEHSARFKLWYTVDKAPDAWDYSQGFVNEEMIRDHLPTPGEEPLILMCGPPPMIQFACLPNLERVGHPKERCFTF.

G2 is lipidated: N-myristoyl glycine. The FAD-binding FR-type domain occupies 40–152 (DIKYPLRLID…RGPNGLLVYQ (113 aa)). At K42 the chain carries N6-acetyllysine. Residue Y43 is modified to Phosphotyrosine. K50 carries the N6-acetyllysine modification. FAD is bound by residues R92, P93, Y94, V109, K111, and F114. K120 carries the N6-acetyllysine modification. FAD contacts are provided by K126, M127, S128, and T185.

The protein belongs to the flavoprotein pyridine nucleotide cytochrome reductase family. In terms of assembly, component of a complex composed of cytochrome b5, NADH-cytochrome b5 reductase (CYB5R3) and MTARC2. Interacts with MTLN; the interaction is required to maintain cellular lipid composition and leads to stimulation of mitochondrial respiratory complex I activity. The cofactor is FAD.

Its subcellular location is the endoplasmic reticulum membrane. The protein resides in the mitochondrion outer membrane. The catalysed reaction is 2 Fe(III)-[cytochrome b5] + NADH = 2 Fe(II)-[cytochrome b5] + NAD(+) + H(+). Functionally, catalyzes the reduction of two molecules of cytochrome b5 using NADH as the electron donor. This is NADH-cytochrome b5 reductase 3 from Mus musculus (Mouse).